A 927-amino-acid chain; its full sequence is Non-lysosomal glucosylceramidase (927 aa).

Positions 32–62 (EETGGTKDVQVTDCKSPEDSRPPKETDCCNP) are disordered. Basic and acidic residues predominate over residues 46–58 (KSPEDSRPPKETD).

This sequence belongs to the non-lysosomal glucosylceramidase family. Widely expressed. Mainly expressed in brain, heart, skeletal muscle, kidney and placenta and expressed at lower levels in liver, spleen, small intestine and lung. Detectable in colon, thymus and peripheral blood leukocytes.

It is found in the endoplasmic reticulum membrane. The protein localises to the golgi apparatus membrane. It carries out the reaction a beta-D-glucosyl-(1&lt;-&gt;1')-N-acylsphing-4-enine + H2O = an N-acylsphing-4-enine + D-glucose. The catalysed reaction is a beta-D-galactosyl-(1&lt;-&gt;1')-N-acylsphing-4-enine + H2O = an N-acylsphing-4-enine + D-galactose. It catalyses the reaction beta-D-glucosyl-(1-&gt;3)-O-lithocholate + H2O = lithocholate + D-glucose. The enzyme catalyses beta-D-glucosyl-(1-&gt;3)-O-chenodeoxycholate + H2O = chenodeoxycholate + D-glucose. It carries out the reaction a di-trans,poly-cis-dolichyl beta-D-glucosyl phosphate + chenodeoxycholate = beta-D-glucosyl-(1-&gt;3)-O-chenodeoxycholate + a di-trans,poly-cis-dolichyl phosphate + H(+). The catalysed reaction is octyl beta-D-glucose + chenodeoxycholate = beta-D-glucosyl-(1-&gt;3)-O-chenodeoxycholate + octan-1-ol. It catalyses the reaction cholesteryl 3-beta-D-glucoside + H2O = cholesterol + D-glucose. The enzyme catalyses a beta-D-glucosyl-(1&lt;-&gt;1')-N-acylsphing-4-enine + cholesterol = cholesteryl 3-beta-D-glucoside + an N-acylsphing-4-enine. It carries out the reaction beta-D-glucosyl-N-(9Z-octadecenoyl)-sphing-4E-enine + cholesterol = N-(9Z-octadecenoyl)-sphing-4-enine + cholesteryl 3-beta-D-glucoside. The catalysed reaction is a beta-D-galactosyl-(1&lt;-&gt;1')-N-acylsphing-4-enine + cholesterol = cholesteryl 3-beta-D-galactoside + an N-acylsphing-4-enine. It catalyses the reaction 1-(beta-D-galactosyl)-N-dodecanoylsphing-4-enine + cholesterol = cholesteryl 3-beta-D-galactoside + N-dodecanoylsphing-4-enine. It participates in lipid metabolism; sphingolipid metabolism. It functions in the pathway steroid metabolism; cholesterol metabolism. Inhibited by AMP-DMN/N -((5-adamantane-1-yl-methoxy)pentyl)-deoxynojirimycin. Activated by Mn(2+), Co(2+) and Mg(2+) and inhibited by Zn(2+). Enzymatic activity is dependent on membrane association and requires the presence of lipids. The membrane-associated enzyme is not inhibited by condutiriol B epoxide and bromocondutiriol B epoxide. Non-lysosomal glucosylceramidase that catalyzes the hydrolysis of glucosylceramides/GlcCers (such as beta-D-glucosyl-(1&lt;-&gt;1')-N-acylsphing-4-enine) to free glucose and ceramides (such as N-acylsphing-4-enine). GlcCers are membrane glycosphingolipids that have a wide intracellular distribution. They are the main precursors of more complex glycosphingolipids that play a role in cellular growth, differentiation, adhesion, signaling, cytoskeletal dynamics and membrane properties. Involved in the transglucosylation of cholesterol, transfers glucose from GlcCer to cholesterol, thereby modifying its water solubility and biological properties. Under specific conditions, may catalyze the reverse reaction, transferring glucose from cholesteryl-3-beta-D-glucoside to ceramide (such as N-acylsphing-4-enine). May play a role in the metabolism of bile acids. Able to hydrolyze bile acid 3-O-glucosides as well as to produce bile acid-glucose conjugates thanks to a bile acid glucosyl transferase activity. Catalyzes the hydrolysis of galactosylceramides/GalCers (such as beta-D-galactosyl-(1&lt;-&gt;1')-N-acylsphing-4-enine), as well as the galactosyl transfer between GalCers and cholesterol in vitro with lower activity compared with their activity against GlcCers. This Homo sapiens (Human) protein is Non-lysosomal glucosylceramidase.